Here is a 789-residue protein sequence, read N- to C-terminus: Protein translocase subunit SecA 2 (789 aa).

Residues Gln-79, 97–101 (GEGKT), and Asp-487 each bind ATP.

This sequence belongs to the SecA family. As to quaternary structure, monomer and homodimer. Part of the essential Sec protein translocation apparatus which comprises SecA, SecYEG and auxiliary proteins SecDF. Other proteins may also be involved.

It is found in the cell membrane. It localises to the cytoplasm. It carries out the reaction ATP + H2O + cellular proteinSide 1 = ADP + phosphate + cellular proteinSide 2.. Functionally, part of the Sec protein translocase complex. Interacts with the SecYEG preprotein conducting channel. Has a central role in coupling the hydrolysis of ATP to the transfer of proteins into and across the cell membrane, serving as an ATP-driven molecular motor driving the stepwise translocation of polypeptide chains across the membrane. In Pediococcus pentosaceus (strain ATCC 25745 / CCUG 21536 / LMG 10740 / 183-1w), this protein is Protein translocase subunit SecA 2.